The chain runs to 525 residues: M-phase inducer phosphatase 1 (525 aa).

A disordered region spans residues 1–42; that stretch reads MELGPEPPHRRRLLFTCSPTPAPQPTGKVQFGASRAGGLSPV. The Phosphodegron motif lies at 74–84; sequence MGSSESTDSGF. S76 bears the Phosphoserine; by CHEK1 mark. Phosphoserine; by NEK11 is present on residues S79, S82, and S88. The residue at position 124 (S124) is a Phosphoserine; by CHEK1 and CHEK2. The KEN box motif lies at 141–143; that stretch reads KEN. A Phosphoserine; by CHEK1 modification is found at S178. Positions 260-318 are disordered; the sequence is FDSPSPCSSTSSCSTRAVKRADRSHEESPRGTKRRKSSEASPVKADVPEPTQLPHQSLS. The span at 262 to 274 shows a compositional bias: low complexity; that stretch reads SPSPCSSTSSCST. Residues 278–289 are compositionally biased toward basic and acidic residues; the sequence is KRADRSHEESPR. Phosphoserine; by CHEK1 and CHEK2 is present on residues S283 and S296. Residues 377–483 enclose the Rhodanese domain; that stretch reads LIKEFVIIDC…FFLKCQSHCE (107 aa). Residue C432 is part of the active site. The residue at position 508 (T508) is a Phosphothreonine; by CHEK1. S514 and S520 each carry phosphoserine; by PLK3.

It belongs to the MPI phosphatase family. Interacts with CCNB1/cyclin B1. Interacts with YWHAE/14-3-3 epsilon when phosphorylated. Interacts with CUL1 specifically when CUL1 is neddylated and active. Interacts with BTRC/BTRCP1 and FBXW11/BTRCP2. Interactions with CUL1, BTRC and FBXW11 are enhanced upon DNA damage. Interacts with CHEK2; mediates CDC25A phosphorylation and degradation in response to infrared-induced DNA damages. Interacts with HSP90AB1; prevents heat shock-mediated CDC25A degradation and contributes to cell cycle progression. Post-translationally, phosphorylated by CHEK1 on Ser-76, Ser-124, Ser-178, Ser-283, Ser-296 and Thr-508 during checkpoint mediated cell cycle arrest. Also phosphorylated by CHEK2 on Ser-124, Ser-283, and Ser-296 during checkpoint mediated cell cycle arrest. Phosphorylation on Ser-178 and Thr-508 creates binding sites for YWHAE/14-3-3 epsilon which inhibits CDC25A. Phosphorylation on Ser-76, Ser-124, Ser-178, Ser-283 and Ser-296 may also promote ubiquitin-dependent proteolysis of CDC25A by the SCF complex. Phosphorylation of CDC25A at Ser-76 by CHEK1 primes it for subsequent phosphorylation at Ser-79, Ser-82 and Ser-88 by NEK11. Phosphorylation by NEK11 is required for BTRC-mediated polyubiquitination and degradation. Phosphorylation by PIM1 leads to an increase in phosphatase activity. Phosphorylated by PLK3 following DNA damage, leading to promote its ubiquitination and degradation. In terms of processing, ubiquitinated by the anaphase promoting complex/cyclosome (APC/C) ubiquitin ligase complex that contains FZR1/CDH1 during G1 phase leading to its degradation by the proteasome. Ubiquitinated by a SCF complex containing BTRC and FBXW11 during S phase leading to its degradation by the proteasome. Deubiquitination by USP17L2/DUB3 leads to its stabilization.

It catalyses the reaction O-phospho-L-tyrosyl-[protein] + H2O = L-tyrosyl-[protein] + phosphate. Stimulated by B-type cyclins. Stimulated by PIM1-mediated phosphorylation. In terms of biological role, tyrosine protein phosphatase which functions as a dosage-dependent inducer of mitotic progression. Directly dephosphorylates CDK1 and stimulates its kinase activity. Also dephosphorylates CDK2 in complex with cyclin-E, in vitro. This chain is M-phase inducer phosphatase 1 (Cdc25a), found in Rattus norvegicus (Rat).